The following is a 700-amino-acid chain: Serine/threonine-protein kinase WNK1 (700 aa).

Residues 24–281 enclose the Protein kinase domain; that stretch reads GRYNEVLGKG…ARELLDDPFL (258 aa). Residues 104–107 and lysine 154 each bind ATP; that span reads TELF. Catalysis depends on aspartate 171, which acts as the Proton acceptor. The span at 314–339 shows a compositional bias: low complexity; sequence NYPSNSSSLNRQYSNGNYPSNSSSLN. Disordered stretches follow at residues 314–345, 551–575, and 647–666; these read NYPS…YSNG, ESRE…EVLY, and ESGE…SVSG. Basic and acidic residues predominate over residues 551–565; the sequence is ESRELSSIDSGHNHS. Acidic residues predominate over residues 566–575; the sequence is EEEEEEEVLY.

This sequence belongs to the protein kinase superfamily. Ser/Thr protein kinase family. WNK subfamily. Autophosphorylated.

It carries out the reaction L-seryl-[protein] + ATP = O-phospho-L-seryl-[protein] + ADP + H(+). The enzyme catalyses L-threonyl-[protein] + ATP = O-phospho-L-threonyl-[protein] + ADP + H(+). Its function is as follows. Regulates flowering time by modulating the photoperiod pathway. Phosphorylates APRR3. In Arabidopsis thaliana (Mouse-ear cress), this protein is Serine/threonine-protein kinase WNK1 (WNK1).